A 39-amino-acid polypeptide reads, in one-letter code: Conotoxin Cl14.7 (39 aa).

Residues 1-15 (MGDLSEADSMKHQLQ) constitute a propeptide that is removed on maturation.

In terms of processing, contains 2 disulfide bonds. As to expression, expressed by the venom duct.

The protein localises to the secreted. The protein is Conotoxin Cl14.7 of Californiconus californicus (California cone).